The primary structure comprises 375 residues: Probable pectin lyase D (375 aa).

The first 19 residues, 1-19 (MKYAAVLTTVAALASRALG), serve as a signal peptide directing secretion. 2 disulfide bridges follow: C82–C101 and C91–C225. N-linked (GlcNAc...) asparagine glycosylation is present at N128. The active site involves R255. C321 and C329 are oxidised to a cystine.

The protein belongs to the polysaccharide lyase 1 family.

The protein resides in the secreted. The catalysed reaction is Eliminative cleavage of (1-&gt;4)-alpha-D-galacturonan methyl ester to give oligosaccharides with 4-deoxy-6-O-methyl-alpha-D-galact-4-enuronosyl groups at their non-reducing ends.. Its function is as follows. Pectinolytic enzymes consist of four classes of enzymes: pectin lyase, polygalacturonase, pectin methylesterase and rhamnogalacturonase. Among pectinolytic enzymes, pectin lyase is the most important in depolymerization of pectin, since it cleaves internal glycosidic bonds of highly methylated pectins. In Aspergillus flavus (strain ATCC 200026 / FGSC A1120 / IAM 13836 / NRRL 3357 / JCM 12722 / SRRC 167), this protein is Probable pectin lyase D (pelD).